We begin with the raw amino-acid sequence, 285 residues long: Phosphatidylserine decarboxylase proenzyme (285 aa).

Active-site charge relay system; for autoendoproteolytic cleavage activity residues include Asp-89, His-146, and Ser-252. Ser-252 (schiff-base intermediate with substrate; via pyruvic acid; for decarboxylase activity) is an active-site residue. Ser-252 bears the Pyruvic acid (Ser); by autocatalysis mark.

It belongs to the phosphatidylserine decarboxylase family. PSD-B subfamily. Prokaryotic type I sub-subfamily. In terms of assembly, heterodimer of a large membrane-associated beta subunit and a small pyruvoyl-containing alpha subunit. Pyruvate serves as cofactor. In terms of processing, is synthesized initially as an inactive proenzyme. Formation of the active enzyme involves a self-maturation process in which the active site pyruvoyl group is generated from an internal serine residue via an autocatalytic post-translational modification. Two non-identical subunits are generated from the proenzyme in this reaction, and the pyruvate is formed at the N-terminus of the alpha chain, which is derived from the carboxyl end of the proenzyme. The autoendoproteolytic cleavage occurs by a canonical serine protease mechanism, in which the side chain hydroxyl group of the serine supplies its oxygen atom to form the C-terminus of the beta chain, while the remainder of the serine residue undergoes an oxidative deamination to produce ammonia and the pyruvoyl prosthetic group on the alpha chain. During this reaction, the Ser that is part of the protease active site of the proenzyme becomes the pyruvoyl prosthetic group, which constitutes an essential element of the active site of the mature decarboxylase.

The protein localises to the cell membrane. The catalysed reaction is a 1,2-diacyl-sn-glycero-3-phospho-L-serine + H(+) = a 1,2-diacyl-sn-glycero-3-phosphoethanolamine + CO2. It functions in the pathway phospholipid metabolism; phosphatidylethanolamine biosynthesis; phosphatidylethanolamine from CDP-diacylglycerol: step 2/2. Its function is as follows. Catalyzes the formation of phosphatidylethanolamine (PtdEtn) from phosphatidylserine (PtdSer). This Vibrio parahaemolyticus serotype O3:K6 (strain RIMD 2210633) protein is Phosphatidylserine decarboxylase proenzyme.